A 361-amino-acid polypeptide reads, in one-letter code: 5-formaminoimidazole-4-carboxamide-1-(beta)-D-ribofuranosyl 5'-monophosphate synthetase (361 aa).

2 residues coordinate 5-amino-1-(5-phospho-beta-D-ribosyl)imidazole-4-carboxamide: His-27 and Ser-94. Residues 116–348 (RAILRWEAER…MGQRIAREIK (233 aa)) enclose the ATP-grasp domain. ATP is bound by residues 146–208 (PDDI…ANYC) and Glu-230. Position 258 (Asn-258) interacts with 5-amino-1-(5-phospho-beta-D-ribosyl)imidazole-4-carboxamide. Mg(2+) is bound by residues Gln-297 and Glu-310.

This sequence belongs to the phosphohexose mutase family. The cofactor is Mg(2+). Mn(2+) serves as cofactor.

It carries out the reaction 5-amino-1-(5-phospho-beta-D-ribosyl)imidazole-4-carboxamide + formate + ATP = 5-formamido-1-(5-phospho-D-ribosyl)imidazole-4-carboxamide + ADP + phosphate. It functions in the pathway purine metabolism; IMP biosynthesis via de novo pathway; 5-formamido-1-(5-phospho-D-ribosyl)imidazole-4-carboxamide from 5-amino-1-(5-phospho-D-ribosyl)imidazole-4-carboxamide (formate route): step 1/1. In terms of biological role, catalyzes the ATP- and formate-dependent formylation of 5-aminoimidazole-4-carboxamide-1-beta-d-ribofuranosyl 5'-monophosphate (AICAR) to 5-formaminoimidazole-4-carboxamide-1-beta-d-ribofuranosyl 5'-monophosphate (FAICAR) in the absence of folates. This is 5-formaminoimidazole-4-carboxamide-1-(beta)-D-ribofuranosyl 5'-monophosphate synthetase from Methanococcus maripaludis (strain C7 / ATCC BAA-1331).